The following is a 462-amino-acid chain: Hemopexin (462 aa).

Positions 1–23 (MARVLGAPVALGLWSLCWSLAIA) are cleaved as a signal peptide. 2 O-linked (GalNAc...) threonine glycosylation sites follow: T24 and T29. Residues 29–48 (TSAHGNVAEGETKPDPDVTE) form a disordered region. An O-glycosylated at one site region spans residues 30–40 (SAHGNVAEGET). The span at 38–48 (GETKPDPDVTE) shows a compositional bias: basic and acidic residues. 3 disulfides stabilise this stretch: C50-C231, C149-C154, and C188-C200. 4 Hemopexin repeats span residues 53–93 (GWSF…WKNF), 94–139 (PSPV…FPGI), 140–184 (PSPL…SWPA), and 185–231 (VGNC…FMPC). N64 is a glycosylation site (N-linked (GlcNAc...) (complex) asparagine). H79 contacts heme. H150 serves as a coordination point for heme. An N-linked (GlcNAc...) (complex) asparagine glycan is attached at N187. H236 contacts heme. 2 N-linked (GlcNAc...) asparagine glycosylation sites follow: N240 and N246. Disulfide bonds link C257-C460, C366-C408, and C418-C435. Hemopexin repeat units lie at residues 259-304 (PHLV…WPQG), 305-352 (PSAV…VGTP), 357-396 (LDSVDAAFICPGSSRLHIMAGRRLWWLDLKSGAQATWTEL), and 400-450 (HEKV…ALPQ). H293 contacts heme. The N-linked (GlcNAc...) (complex) asparagine glycan is linked to N453.

This sequence belongs to the hemopexin family. Interacts with FLVCR1. In terms of assembly, (Microbial infection) Interacts with hepatitis E virus/HEV protein ORF3. N- and O-glycosylated. O-glycosylated with core 1 or possibly core 8 glycans. O-glycosylation in the 30-40 region is minor compared to glycosylation at Thr-24 and Thr-29. Expressed by the liver and secreted in plasma.

Its subcellular location is the secreted. Functionally, binds heme and transports it to the liver for breakdown and iron recovery, after which the free hemopexin returns to the circulation. The chain is Hemopexin (HPX) from Homo sapiens (Human).